The chain runs to 425 residues: Xylose isomerase (425 aa).

Active-site residues include His-101 and Asp-104. Mg(2+)-binding residues include Glu-232, Glu-268, His-271, Asp-296, Asp-307, Asp-309, and Asp-339.

It belongs to the xylose isomerase family. As to quaternary structure, homotetramer. It depends on Mg(2+) as a cofactor.

It is found in the cytoplasm. The enzyme catalyses alpha-D-xylose = alpha-D-xylulofuranose. This is Xylose isomerase from Salmonella paratyphi A (strain ATCC 9150 / SARB42).